Consider the following 417-residue polypeptide: Gamma-glutamyl phosphate reductase (417 aa).

It belongs to the gamma-glutamyl phosphate reductase family.

It is found in the cytoplasm. The catalysed reaction is L-glutamate 5-semialdehyde + phosphate + NADP(+) = L-glutamyl 5-phosphate + NADPH + H(+). It participates in amino-acid biosynthesis; L-proline biosynthesis; L-glutamate 5-semialdehyde from L-glutamate: step 2/2. Functionally, catalyzes the NADPH-dependent reduction of L-glutamate 5-phosphate into L-glutamate 5-semialdehyde and phosphate. The product spontaneously undergoes cyclization to form 1-pyrroline-5-carboxylate. This chain is Gamma-glutamyl phosphate reductase, found in Klebsiella pneumoniae subsp. pneumoniae (strain ATCC 700721 / MGH 78578).